A 643-amino-acid polypeptide reads, in one-letter code: Threonine--tRNA ligase (643 aa).

The TGS domain maps to 1–61 (MPIITLPDGS…SEDSSLEIIT (61 aa)). The interval 243–534 (DHRRIGKALD…ITEEYAGFFP (292 aa)) is catalytic. Residues Cys334, His385, and His511 each contribute to the Zn(2+) site.

It belongs to the class-II aminoacyl-tRNA synthetase family. In terms of assembly, homodimer. Zn(2+) serves as cofactor.

Its subcellular location is the cytoplasm. It carries out the reaction tRNA(Thr) + L-threonine + ATP = L-threonyl-tRNA(Thr) + AMP + diphosphate + H(+). Its function is as follows. Catalyzes the attachment of threonine to tRNA(Thr) in a two-step reaction: L-threonine is first activated by ATP to form Thr-AMP and then transferred to the acceptor end of tRNA(Thr). Also edits incorrectly charged L-seryl-tRNA(Thr). The sequence is that of Threonine--tRNA ligase from Actinobacillus pleuropneumoniae serotype 7 (strain AP76).